The chain runs to 294 residues: Ribosomal protein L11 methyltransferase (294 aa).

S-adenosyl-L-methionine contacts are provided by threonine 145, glycine 166, aspartate 188, and asparagine 227.

The protein belongs to the methyltransferase superfamily. PrmA family.

The protein localises to the cytoplasm. The catalysed reaction is L-lysyl-[protein] + 3 S-adenosyl-L-methionine = N(6),N(6),N(6)-trimethyl-L-lysyl-[protein] + 3 S-adenosyl-L-homocysteine + 3 H(+). Functionally, methylates ribosomal protein L11. The polypeptide is Ribosomal protein L11 methyltransferase (Hydrogenovibrio crunogenus (strain DSM 25203 / XCL-2) (Thiomicrospira crunogena)).